The following is a 145-amino-acid chain: D-aminoacyl-tRNA deacylase (145 aa).

A Gly-cisPro motif, important for rejection of L-amino acids motif is present at residues 137–138; that stretch reads GP.

It belongs to the DTD family. Homodimer.

Its subcellular location is the cytoplasm. The enzyme catalyses glycyl-tRNA(Ala) + H2O = tRNA(Ala) + glycine + H(+). It carries out the reaction a D-aminoacyl-tRNA + H2O = a tRNA + a D-alpha-amino acid + H(+). An aminoacyl-tRNA editing enzyme that deacylates mischarged D-aminoacyl-tRNAs. Also deacylates mischarged glycyl-tRNA(Ala), protecting cells against glycine mischarging by AlaRS. Acts via tRNA-based rather than protein-based catalysis; rejects L-amino acids rather than detecting D-amino acids in the active site. By recycling D-aminoacyl-tRNA to D-amino acids and free tRNA molecules, this enzyme counteracts the toxicity associated with the formation of D-aminoacyl-tRNA entities in vivo and helps enforce protein L-homochirality. The protein is D-aminoacyl-tRNA deacylase of Cereibacter sphaeroides (strain KD131 / KCTC 12085) (Rhodobacter sphaeroides).